The following is a 310-amino-acid chain: Alpha/beta hydrolase domain-containing protein 17C (310 aa).

Active-site charge relay system residues include S192, D257, and H286.

Belongs to the AB hydrolase superfamily. ABHD17 family. Palmitoylated on cysteine residues located in a cysteine cluster at the N-terminus which promotes membrane localization.

The protein localises to the recycling endosome membrane. It is found in the cell projection. It localises to the dendritic spine. The protein resides in the postsynaptic density membrane. It carries out the reaction S-hexadecanoyl-L-cysteinyl-[protein] + H2O = L-cysteinyl-[protein] + hexadecanoate + H(+). Functionally, hydrolyzes fatty acids from S-acylated cysteine residues in proteins. In Xenopus tropicalis (Western clawed frog), this protein is Alpha/beta hydrolase domain-containing protein 17C.